We begin with the raw amino-acid sequence, 408 residues long: MQIPSKLKPYYENIAFEQEDSKMIINLGPQHPSAHGNLRLILELDGEQVVKARPCIGYMHRGMEKMAENMIYQEFIPTTDRMDYIAASANNYAYCAAVEKLCGLEIPRRAAVIRMILLELNRITSHLLWLATHALDIGAMSVFLYCFREREYVLDLIEKYCGARLTHSSMRIGGVMLDLPENYLEEMLAFCDKFPNDLKDYEDLLDDNRIWRLRTENVGVVTKEQALNWGCTGVMLRGSGIKYDIRKEEPYLLYNEVEFGVPYATQGDSYARYKVYMQEFRESLKILRQCAMLYKDTSPEILATHPEYVSASKEQILTQNYSLMQHFVLITQGLKPPKGEVYVPTESPKGELGFFIHSDGTGRPYRLKARTPSYWHCAFFEEMLVGTYLADVVAIMGNVNIVLGEIDR.

This sequence belongs to the complex I 49 kDa subunit family. NDH-1 is composed of 14 different subunits. Subunits NuoB, C, D, E, F, and G constitute the peripheral sector of the complex.

It is found in the cell inner membrane. It carries out the reaction a quinone + NADH + 5 H(+)(in) = a quinol + NAD(+) + 4 H(+)(out). Functionally, NDH-1 shuttles electrons from NADH, via FMN and iron-sulfur (Fe-S) centers, to quinones in the respiratory chain. The immediate electron acceptor for the enzyme in this species is believed to be ubiquinone. Couples the redox reaction to proton translocation (for every two electrons transferred, four hydrogen ions are translocated across the cytoplasmic membrane), and thus conserves the redox energy in a proton gradient. The protein is NADH-quinone oxidoreductase subunit D of Campylobacter jejuni subsp. jejuni serotype O:2 (strain ATCC 700819 / NCTC 11168).